The primary structure comprises 380 residues: MTNYPITYRLIKKEKHTGARLGEIITPHGTFPTPMFMPVGTQATVKTQSPEELKEIGSGIILSNTYHLWLRPGDELIARAGGLHKFMNWDQAILTDSGGFQVYSLADSRNITEEGVTFKNHLNGSKMFLSPEKAISIQNNLGSDIMMSFDECPQFYQPYDYVKKSIERTSRWAERGLKAHRRPHDQGLFGIVQGAGFEDLRRQSAADLVSMDFPGYSIGGLAVGESHAEMNAVLDFTTPLLPENKPRYLMGVGAPDSLIDGVIRGVDMFDCVLPTRIARNGTCMTSEGRLVVKNAKFAEDFTPLDHHCDCYTCQHYTRAYLRHLLKADETFGMRLTSYHNLYFLVNLMKQVRQAILDDNLLEFRQDFLERYGYNSSSRNF.

Asp-96 serves as the catalytic Proton acceptor. Residues 96–100 (DSGGF), Asp-150, Gln-193, and Gly-220 each bind substrate. Residues 251-257 (GVGAPDS) form an RNA binding region. Residue Asp-270 is the Nucleophile of the active site. The tract at residues 275-279 (TRIAR) is RNA binding; important for wobble base 34 recognition. 4 residues coordinate Zn(2+): Cys-308, Cys-310, Cys-313, and His-339.

Belongs to the queuine tRNA-ribosyltransferase family. In terms of assembly, homodimer. Within each dimer, one monomer is responsible for RNA recognition and catalysis, while the other monomer binds to the replacement base PreQ1. Zn(2+) serves as cofactor.

The catalysed reaction is 7-aminomethyl-7-carbaguanine + guanosine(34) in tRNA = 7-aminomethyl-7-carbaguanosine(34) in tRNA + guanine. Its pathway is tRNA modification; tRNA-queuosine biosynthesis. Functionally, catalyzes the base-exchange of a guanine (G) residue with the queuine precursor 7-aminomethyl-7-deazaguanine (PreQ1) at position 34 (anticodon wobble position) in tRNAs with GU(N) anticodons (tRNA-Asp, -Asn, -His and -Tyr). Catalysis occurs through a double-displacement mechanism. The nucleophile active site attacks the C1' of nucleotide 34 to detach the guanine base from the RNA, forming a covalent enzyme-RNA intermediate. The proton acceptor active site deprotonates the incoming PreQ1, allowing a nucleophilic attack on the C1' of the ribose to form the product. After dissociation, two additional enzymatic reactions on the tRNA convert PreQ1 to queuine (Q), resulting in the hypermodified nucleoside queuosine (7-(((4,5-cis-dihydroxy-2-cyclopenten-1-yl)amino)methyl)-7-deazaguanosine). The protein is Queuine tRNA-ribosyltransferase of Streptococcus equi subsp. equi (strain 4047).